Here is a 112-residue protein sequence, read N- to C-terminus: uncharacterized protein (112 aa).

Residues 85–105 (IVQLIILFAIIITNPNAIELI) traverse the membrane as a helical segment.

It belongs to the M.jannaschii MJ0023/MJ0349/MJ1072/MJ1074/MJ1107/MJECL16 family.

The protein resides in the membrane. This is an uncharacterized protein from Methanocaldococcus jannaschii (strain ATCC 43067 / DSM 2661 / JAL-1 / JCM 10045 / NBRC 100440) (Methanococcus jannaschii).